Reading from the N-terminus, the 111-residue chain is Inner membrane protein H108R (111 aa).

Residues 10–32 (LIVIITILITTRELSTTMLIVSL) form a helical membrane-spanning segment. Residue N65 is glycosylated (N-linked (GlcNAc...) asparagine; by host).

It belongs to the asfivirus H108R family.

The protein resides in the virion membrane. The chain is Inner membrane protein H108R from African swine fever virus (isolate Tick/Malawi/Lil 20-1/1983) (ASFV).